A 273-amino-acid polypeptide reads, in one-letter code: NAD-dependent protein deacylase (273 aa).

A Deacetylase sirtuin-type domain is found at 20–272 (RERLRQRIFF…PEFVDKFLKG (253 aa)). Residue 48–67 (GAGISAESGIRTFRAADGLW) coordinates NAD(+). Substrate-binding residues include tyrosine 92 and arginine 95. Residue 129–132 (QNID) participates in NAD(+) binding. Catalysis depends on histidine 147, which acts as the Proton acceptor. 2 residues coordinate Zn(2+): cysteine 155 and cysteine 174. Residues 214 to 216 (GTS), 240 to 242 (NLE), and alanine 258 contribute to the NAD(+) site.

It belongs to the sirtuin family. Class III subfamily. Requires Zn(2+) as cofactor.

Its subcellular location is the cytoplasm. The enzyme catalyses N(6)-acetyl-L-lysyl-[protein] + NAD(+) + H2O = 2''-O-acetyl-ADP-D-ribose + nicotinamide + L-lysyl-[protein]. It carries out the reaction N(6)-succinyl-L-lysyl-[protein] + NAD(+) + H2O = 2''-O-succinyl-ADP-D-ribose + nicotinamide + L-lysyl-[protein]. It catalyses the reaction N(6)-(2-hydroxyisobutanoyl)-L-lysyl-[protein] + NAD(+) + H2O = 2''-O-(2-hydroxyisobutanoyl)-ADP-D-ribose + nicotinamide + L-lysyl-[protein]. Functionally, NAD-dependent lysine deacetylase that specifically removes acetyl groups on target proteins. Also acts as a protein-lysine deacylase by mediating protein desuccinylation and de-2-hydroxyisobutyrylation. Modulates the activities of several proteins which are inactive in their acylated form. This Salmonella typhi protein is NAD-dependent protein deacylase.